The sequence spans 606 residues: DNA-directed RNA polymerase III subunit RPC3 (606 aa).

The interval 533-554 (LTFCMADILSNIQQFKNDNKIL) is leucine-zipper.

The protein belongs to the RNA polymerase beta chain family. Component of the RNA polymerase III (Pol III) complex consisting of 17 subunits.

The protein localises to the nucleus. In terms of biological role, DNA-dependent RNA polymerase catalyzes the transcription of DNA into RNA using the four ribonucleoside triphosphates as substrates. Specific core component of RNA polymerase III which synthesizes small RNAs, such as 5S rRNA and tRNAs. This chain is DNA-directed RNA polymerase III subunit RPC3 (RPC82), found in Debaryomyces hansenii (strain ATCC 36239 / CBS 767 / BCRC 21394 / JCM 1990 / NBRC 0083 / IGC 2968) (Yeast).